Here is a 402-residue protein sequence, read N- to C-terminus: Multidrug resistance protein MdtH (402 aa).

The Cytoplasmic portion of the chain corresponds to 1–12 (MSRVSQARNLGK). The helical transmembrane segment at 13-33 (YFLLIDNMLVVLGFFVVFPLI) threads the bilayer. Residues 34–98 (SIRFVDQMGW…GFATMGIAHE (65 aa)) lie on the Periplasmic side of the membrane. Residues 99 to 116 (PWLLWFSCLLSGLGGTLF) form a helical membrane-spanning segment. Residues 117–138 (DPPRSALVVKLIRPQQRGRFFS) are Cytoplasmic-facing. A helical membrane pass occupies residues 139–159 (LLMMQDSASAVIGALLGSWLL). Residues 160 to 164 (QYDFR) are Periplasmic-facing. The helical transmembrane segment at 165 to 185 (LVCATGPVLFVLCAAFNAWLL) threads the bilayer. At 186–213 (PAWKLSTVRTPVREGMTRVMRDKRFVTY) the chain is on the cytoplasmic side. A helical membrane pass occupies residues 214 to 234 (VLTLAGYYMLAVQVMLMLPIM). The Periplasmic portion of the chain corresponds to 235-243 (VNDVAGAPS). The chain crosses the membrane as a helical span at residues 244–264 (AVKWMYAIEACLSLTLLYPIA). Residues 265 to 276 (RWSEKHFRLEHR) lie on the Cytoplasmic side of the membrane. A helical membrane pass occupies residues 277 to 297 (LMAGLLIMSLSMMPVGMVSGL). The Periplasmic segment spans residues 298–299 (QQ). A helical transmembrane segment spans residues 300-320 (LFTLICLFYIGSIIAEPARET). Over 321–339 (LSASLADARARGSYMGFSR) the chain is Cytoplasmic. The helical transmembrane segment at 340–360 (LGLAIGGAIGYIGGGWLFDLG) threads the bilayer. Over 361–367 (KSAHQPE) the chain is Periplasmic. A helical transmembrane segment spans residues 368 to 388 (LPWMMLGIIGIFTFLALGWQF). The Cytoplasmic portion of the chain corresponds to 389–402 (SQKRAARRLLERDA).

This sequence belongs to the major facilitator superfamily. DHA1 family. MdtH (TC 2.A.1.2.21) subfamily.

It is found in the cell inner membrane. This Shigella flexneri serotype 5b (strain 8401) protein is Multidrug resistance protein MdtH.